The chain runs to 246 residues: Putative outer membrane protein YiaT (246 aa).

The signal sequence occupies residues 1–21 (MLINRNIVALFALPFMASATA).

This sequence belongs to the MipA/OmpV family.

The protein localises to the cell outer membrane. In Escherichia coli (strain K12), this protein is Putative outer membrane protein YiaT (yiaT).